A 159-amino-acid polypeptide reads, in one-letter code: SsrA-binding protein (159 aa).

This sequence belongs to the SmpB family.

Its subcellular location is the cytoplasm. Its function is as follows. Required for rescue of stalled ribosomes mediated by trans-translation. Binds to transfer-messenger RNA (tmRNA), required for stable association of tmRNA with ribosomes. tmRNA and SmpB together mimic tRNA shape, replacing the anticodon stem-loop with SmpB. tmRNA is encoded by the ssrA gene; the 2 termini fold to resemble tRNA(Ala) and it encodes a 'tag peptide', a short internal open reading frame. During trans-translation Ala-aminoacylated tmRNA acts like a tRNA, entering the A-site of stalled ribosomes, displacing the stalled mRNA. The ribosome then switches to translate the ORF on the tmRNA; the nascent peptide is terminated with the 'tag peptide' encoded by the tmRNA and targeted for degradation. The ribosome is freed to recommence translation, which seems to be the essential function of trans-translation. This Coxiella burnetii (strain CbuK_Q154) (Coxiella burnetii (strain Q154)) protein is SsrA-binding protein.